The following is a 280-amino-acid chain: Succinate dehydrogenase [ubiquinone] iron-sulfur subunit, mitochondrial (280 aa).

The N-terminal 28 residues, 1–28, are a transit peptide targeting the mitochondrion; the sequence is MAAVVALSLRRRLPATTLGGACLQASRG. The region spanning 40–133 is the 2Fe-2S ferredoxin-type domain; that stretch reads KKFAIYRWDP…VSKIYPLPHM (94 aa). 2 positions are modified to N6-acetyllysine: K51 and K55. [2Fe-2S] cluster-binding residues include C93, C98, C101, and C113. Residues 146-218 are interaction with SDHAF1; it reads FYAQYKSIEP…PAVLMQAYRW (73 aa). Positions 176 to 206 constitute a 4Fe-4S ferredoxin-type domain; it reads EREKLDGLYECILCACCSTSCPSYWWNGDKY. C186, C189, and C192 together coordinate [4Fe-4S] cluster. C196 contributes to the [3Fe-4S] cluster binding site. W201 is a binding site for a ubiquinone. [3Fe-4S] cluster is bound by residues C243 and C249. Position 253 (C253) interacts with [4Fe-4S] cluster.

This sequence belongs to the succinate dehydrogenase/fumarate reductase iron-sulfur protein family. Component of complex II composed of four subunits: the flavoprotein (FP) SDHA, iron-sulfur protein (IP) SDHB, and a cytochrome b560 composed of SDHC and SDHD. Interacts with SDHAF1; the interaction is required for iron-sulfur cluster incorporation into SDHB. As to quaternary structure, (Microbial infection) Interacts with JC virus small t antigen. It depends on [2Fe-2S] cluster as a cofactor. [3Fe-4S] cluster serves as cofactor. [4Fe-4S] cluster is required as a cofactor.

It is found in the mitochondrion inner membrane. The catalysed reaction is a quinone + succinate = fumarate + a quinol. The enzyme catalyses (R)-malate + a quinone = enol-oxaloacetate + a quinol. It catalyses the reaction (S)-malate + a quinone = enol-oxaloacetate + a quinol. It functions in the pathway carbohydrate metabolism; tricarboxylic acid cycle; fumarate from succinate (eukaryal route): step 1/1. Its activity is regulated as follows. Enol-oxaloacetate inhibits the succinate dehydrogenase activity. In terms of biological role, iron-sulfur protein (IP) subunit of the succinate dehydrogenase complex (mitochondrial respiratory chain complex II), responsible for transferring electrons from succinate to ubiquinone (coenzyme Q). SDH also oxidizes malate to the non-canonical enol form of oxaloacetate, enol-oxaloacetate. Enol-oxaloacetate, which is a potent inhibitor of the succinate dehydrogenase activity, is further isomerized into keto-oxaloacetate. In Homo sapiens (Human), this protein is Succinate dehydrogenase [ubiquinone] iron-sulfur subunit, mitochondrial (SDHB).